Here is a 611-residue protein sequence, read N- to C-terminus: Dihydroxy-acid dehydratase (611 aa).

Residue Asp-81 coordinates Mg(2+). Cys-122 is a [2Fe-2S] cluster binding site. Residues Asp-123 and Lys-124 each contribute to the Mg(2+) site. Lys-124 is modified (N6-carboxylysine). A [2Fe-2S] cluster-binding site is contributed by Cys-195. Residue Glu-491 coordinates Mg(2+). The Proton acceptor role is filled by Ser-517.

This sequence belongs to the IlvD/Edd family. In terms of assembly, homodimer. It depends on [2Fe-2S] cluster as a cofactor. The cofactor is Mg(2+).

It catalyses the reaction (2R)-2,3-dihydroxy-3-methylbutanoate = 3-methyl-2-oxobutanoate + H2O. The catalysed reaction is (2R,3R)-2,3-dihydroxy-3-methylpentanoate = (S)-3-methyl-2-oxopentanoate + H2O. The protein operates within amino-acid biosynthesis; L-isoleucine biosynthesis; L-isoleucine from 2-oxobutanoate: step 3/4. It participates in amino-acid biosynthesis; L-valine biosynthesis; L-valine from pyruvate: step 3/4. Its function is as follows. Functions in the biosynthesis of branched-chain amino acids. Catalyzes the dehydration of (2R,3R)-2,3-dihydroxy-3-methylpentanoate (2,3-dihydroxy-3-methylvalerate) into 2-oxo-3-methylpentanoate (2-oxo-3-methylvalerate) and of (2R)-2,3-dihydroxy-3-methylbutanoate (2,3-dihydroxyisovalerate) into 2-oxo-3-methylbutanoate (2-oxoisovalerate), the penultimate precursor to L-isoleucine and L-valine, respectively. The chain is Dihydroxy-acid dehydratase from Allorhizobium ampelinum (strain ATCC BAA-846 / DSM 112012 / S4) (Agrobacterium vitis (strain S4)).